Reading from the N-terminus, the 60-residue chain is RTKRDVCELPFEEGPCFAAIRVYAYNAETGNCEQLTYGGCEGNGNRFATLEDCDNACARY.

Positions 1–2 are excised as a propeptide; sequence RT. In terms of domain architecture, BPTI/Kunitz inhibitor spans 7 to 57; it reads CELPFEEGPCFAAIRVYAYNAETGNCEQLTYGGCEGNGNRFATLEDCDNAC. 3 disulfide bridges follow: Cys7–Cys57, Cys16–Cys40, and Cys32–Cys53.

It belongs to the venom Kunitz-type family. Expressed by the venom duct.

It localises to the secreted. This Californiconus californicus (California cone) protein is Kunitz-type serine protease inhibitor conotoxin Cal9.1c.